Here is a 217-residue protein sequence, read N- to C-terminus: Uracil-DNA glycosylase (217 aa).

Catalysis depends on D62, which acts as the Proton acceptor.

The protein belongs to the uracil-DNA glycosylase (UDG) superfamily. UNG family.

The protein localises to the cytoplasm. It carries out the reaction Hydrolyzes single-stranded DNA or mismatched double-stranded DNA and polynucleotides, releasing free uracil.. In terms of biological role, excises uracil residues from the DNA which can arise as a result of misincorporation of dUMP residues by DNA polymerase or due to deamination of cytosine. This Streptococcus suis (strain 98HAH33) protein is Uracil-DNA glycosylase.